The following is a 165-amino-acid chain: Phosphopantetheine adenylyltransferase (165 aa).

S10 contacts substrate. ATP-binding positions include 10 to 11 (SF) and H18. The substrate site is built by K42, T79, and R93. Residues 94-96 (GLR), E104, and 129-135 (VRPITAT) contribute to the ATP site.

It belongs to the bacterial CoaD family. As to quaternary structure, homohexamer. Requires Mg(2+) as cofactor.

Its subcellular location is the cytoplasm. The catalysed reaction is (R)-4'-phosphopantetheine + ATP + H(+) = 3'-dephospho-CoA + diphosphate. It functions in the pathway cofactor biosynthesis; coenzyme A biosynthesis; CoA from (R)-pantothenate: step 4/5. Reversibly transfers an adenylyl group from ATP to 4'-phosphopantetheine, yielding dephospho-CoA (dPCoA) and pyrophosphate. The protein is Phosphopantetheine adenylyltransferase of Rhodopseudomonas palustris (strain BisB5).